The sequence spans 136 residues: Histone H2B.5 (136 aa).

Positions 1–36 (MAPKAEKKPAAEKKPVETEKKPKAEKRVPGKDGGAD) are enriched in basic and acidic residues. Residues 1 to 44 (MAPKAEKKPAAEKKPVETEKKPKAEKRVPGKDGGADKKKKKAKK) form a disordered region. N6-acetyllysine occurs at positions 7 and 26. Lys132 is covalently cross-linked (Glycyl lysine isopeptide (Lys-Gly) (interchain with G-Cter in ubiquitin)).

This sequence belongs to the histone H2B family. In terms of assembly, the nucleosome is a histone octamer containing two molecules each of H2A, H2B, H3 and H4 assembled in one H3-H4 heterotetramer and two H2A-H2B heterodimers. The octamer wraps approximately 147 bp of DNA. Can be acetylated to form H2BK6ac and H2BK33ac. Post-translationally, monoubiquitinated to form H2BK143ub1; may give a specific tag for epigenetic transcriptional activation.

Its subcellular location is the nucleus. It is found in the chromosome. Its function is as follows. Core component of nucleosome. Nucleosomes wrap and compact DNA into chromatin, limiting DNA accessibility to the cellular machineries which require DNA as a template. Histones thereby play a central role in transcription regulation, DNA repair, DNA replication and chromosomal stability. DNA accessibility is regulated via a complex set of post-translational modifications of histones, also called histone code, and nucleosome remodeling. This Triticum aestivum (Wheat) protein is Histone H2B.5.